A 272-amino-acid polypeptide reads, in one-letter code: Protein STAY-GREEN 1, chloroplastic (272 aa).

Residues 1–50 (MGTLTTSLVVPSKLNNEQQSSIFIHKTRRKCKKNQSIVPVARLFGPAIFE) constitute a chloroplast transit peptide. The tract at residues 201 to 222 (TSPSSSSGGVGGVKSTSFTSNS) is disordered.

It belongs to the staygreen family. As to quaternary structure, interacts with PSY1.

Its subcellular location is the plastid. The protein localises to the chloroplast. Its function is as follows. Required to trigger chlorophyll degradation during leaf senescence and fruit ripening. Binds directly PSY1 to regulate the accumulation of lycopene and beta-carotene in the maturing fruits. The protein is Protein STAY-GREEN 1, chloroplastic of Solanum lycopersicum (Tomato).